A 413-amino-acid polypeptide reads, in one-letter code: MRGEIISVGTELLLGQILNTNAKYLSEKLALLGIDIYFHTNVGDNEERLKECLNIAFNRSDLIITTGGLGPTVDDITKETVASFLGLPLVENIEAKEEIIRFFEKIGQTPTMNNFKQAFFPEGAKILPNKNGTAPGCIIEKDNKIIIILPGPPSELIPMFEESVYPYLKSKTNETIKSRVIKIFGLGESKVEEMVKPLLFNSNPTVAPLVGDGYVTLRITAKGHDDKEILEMIEDMESRIRGIIGDYIYAVDEEEMEEVVIKLLQKNKLTLAVSESCTGGLLAKKITDVSGASKVFNLGVVSYSNEAKENILGVRKSTLESYGAVSHETAKEMAENIRKLANADFGLSTTGIAGPTGGTPEKPVGLVYVGFATNEKVYVKKLMLSGDRSKIRTRTVLHALDIVRRYLLGIKID.

It belongs to the CinA family.

The protein is Putative competence-damage inducible protein of Thermoanaerobacter pseudethanolicus (strain ATCC 33223 / 39E) (Clostridium thermohydrosulfuricum).